A 938-amino-acid chain; its full sequence is Isoleucine--tRNA ligase (938 aa).

The 'HIGH' region motif lies at proline 58–histidine 68. Residue glutamate 566 coordinates L-isoleucyl-5'-AMP. Positions lysine 607–serine 611 match the 'KMSKS' region motif. Residue lysine 610 coordinates ATP. Positions 906, 909, 926, and 929 each coordinate Zn(2+).

Belongs to the class-I aminoacyl-tRNA synthetase family. IleS type 1 subfamily. As to quaternary structure, monomer. The cofactor is Zn(2+).

It is found in the cytoplasm. It carries out the reaction tRNA(Ile) + L-isoleucine + ATP = L-isoleucyl-tRNA(Ile) + AMP + diphosphate. Its function is as follows. Catalyzes the attachment of isoleucine to tRNA(Ile). As IleRS can inadvertently accommodate and process structurally similar amino acids such as valine, to avoid such errors it has two additional distinct tRNA(Ile)-dependent editing activities. One activity is designated as 'pretransfer' editing and involves the hydrolysis of activated Val-AMP. The other activity is designated 'posttransfer' editing and involves deacylation of mischarged Val-tRNA(Ile). This Nitratidesulfovibrio vulgaris (strain ATCC 29579 / DSM 644 / CCUG 34227 / NCIMB 8303 / VKM B-1760 / Hildenborough) (Desulfovibrio vulgaris) protein is Isoleucine--tRNA ligase.